We begin with the raw amino-acid sequence, 397 residues long: Acetate kinase (397 aa).

Asparagine 7 serves as a coordination point for Mg(2+). Lysine 14 is an ATP binding site. Arginine 91 is a binding site for substrate. The active-site Proton donor/acceptor is the aspartate 148. Residues histidine 208–glycine 212, aspartate 283–arginine 285, and glycine 331–asparagine 335 contribute to the ATP site. Glutamate 384 is a binding site for Mg(2+).

Belongs to the acetokinase family. Homodimer. Mg(2+) is required as a cofactor. It depends on Mn(2+) as a cofactor.

Its subcellular location is the cytoplasm. The catalysed reaction is acetate + ATP = acetyl phosphate + ADP. Its pathway is metabolic intermediate biosynthesis; acetyl-CoA biosynthesis; acetyl-CoA from acetate: step 1/2. Catalyzes the formation of acetyl phosphate from acetate and ATP. Can also catalyze the reverse reaction. The chain is Acetate kinase from Azobacteroides pseudotrichonymphae genomovar. CFP2.